A 360-amino-acid polypeptide reads, in one-letter code: Heme A synthase (360 aa).

5 consecutive transmembrane segments (helical) span residues 13-33, 99-119, 129-149, 160-180, and 199-219; these read AVRW…LVGG, LLGR…LWRG, LWLL…MVAS, YRLA…VWTV, and SALL…VAGL. Histidine 263 lines the heme pocket. Transmembrane regions (helical) follow at residues 265 to 282, 292 to 312, and 315 to 335; these read MTAY…FDAV, GALW…LTLL, and VPIG…TLAV. Position 323 (histidine 323) interacts with heme.

This sequence belongs to the COX15/CtaA family. Type 2 subfamily. In terms of assembly, interacts with CtaB. Requires heme b as cofactor.

Its subcellular location is the cell membrane. It catalyses the reaction Fe(II)-heme o + 2 A + H2O = Fe(II)-heme a + 2 AH2. The protein operates within porphyrin-containing compound metabolism; heme A biosynthesis; heme A from heme O: step 1/1. Functionally, catalyzes the conversion of heme O to heme A by two successive hydroxylations of the methyl group at C8. The first hydroxylation forms heme I, the second hydroxylation results in an unstable dihydroxymethyl group, which spontaneously dehydrates, resulting in the formyl group of heme A. The polypeptide is Heme A synthase (Bradyrhizobium diazoefficiens (strain JCM 10833 / BCRC 13528 / IAM 13628 / NBRC 14792 / USDA 110)).